The primary structure comprises 747 residues: Heterogeneous nuclear ribonucleoprotein U-like protein 2 (747 aa).

Positions 3–37 (VKRLKVTELRSELQRRGLDSRGLKVDLAQRLQEAL) constitute an SAP domain. 2 disordered regions span residues 40–242 (EMLE…EEED) and 627–666 (EEARKLLPPSEKRTNRRNNRNKRNRQNRSRGQGYVGGQRR). Residues 73-97 (GDEEEDEEEEEEDEEALLEDEDEEP) show a composition bias toward acidic residues. Positions 115 to 125 (EAAAMEAAAEP) are enriched in low complexity. A compositionally biased stretch (gly residues) spans 137-147 (GSGGVNGGEEQ). Residues 148 to 163 (GLGKREEDEPEERSGD) show a composition bias toward basic and acidic residues. Phosphoserine is present on Ser-161. Thr-165 is modified (phosphothreonine). Residues Ser-168, Ser-185, Ser-188, Ser-226, and Ser-228 each carry the phosphoserine modification. The segment covering 185 to 223 (SEKSKPAGSDGERRGVKRQRDEKDEHGRAYYEFREEAYH) has biased composition (basic and acidic residues). One can recognise a B30.2/SPRY domain in the interval 226–419 (SKSPLPPEEE…VELNFGQKEE (194 aa)). The span at 232–242 (PEEEAKDEEED) shows a compositional bias: acidic residues. Residues 627–639 (EEARKLLPPSEKR) are compositionally biased toward basic and acidic residues. Basic residues predominate over residues 640-654 (TNRRNNRNKRNRQNR). Omega-N-methylarginine occurs at positions 656, 684, 738, and 747.

As to quaternary structure, binds to MLF1 and retains it in the nucleus.

Its subcellular location is the nucleus. This is Heterogeneous nuclear ribonucleoprotein U-like protein 2 (HNRNPUL2) from Homo sapiens (Human).